The sequence spans 602 residues: DEAD-box ATP-dependent RNA helicase 52A (602 aa).

Residues 9-31 (KSVEAGGEPGGGGGGAWSTVSRS) are disordered. A compositionally biased stretch (gly residues) spans 15-24 (GEPGGGGGGA). The Q motif motif lies at 84 to 112 (DGFEAAGLVEAVLRNVARCGYESPTPVQR). The Helicase ATP-binding domain occupies 115–305 (MPIALAGRDL…SDFLSNYIFI (191 aa)). Position 128-135 (128-135 (AQTGSGKT)) interacts with ATP. The short motif at 249–252 (DEAD) is the DEAD box element. A Helicase C-terminal domain is found at 328-485 (EKRGYLLDLL…DVPDWLVQYA (158 aa)). Disordered regions lie at residues 492–521 (GSSY…SGGG) and 552–602 (RGGG…SGWD). Gly residues predominate over residues 552 to 574 (RGGGYSRGGRGGYSGGGGGGGGD).

This sequence belongs to the DEAD box helicase family. DDX3/DED1 subfamily.

The catalysed reaction is ATP + H2O = ADP + phosphate + H(+). This is DEAD-box ATP-dependent RNA helicase 52A from Oryza sativa subsp. japonica (Rice).